The sequence spans 549 residues: Cytoplasmic trehalase (549 aa).

Substrate is bound by residues Arg168, 175-176, Asn212, 221-223, 292-294, and Gly324; these read WD, RSQ, and RDE. Residues Asp326 and Glu509 each act as proton donor/acceptor in the active site. Substrate is bound at residue Glu525.

Belongs to the glycosyl hydrolase 37 family. In terms of assembly, monomer.

It is found in the cytoplasm. The catalysed reaction is alpha,alpha-trehalose + H2O = alpha-D-glucose + beta-D-glucose. The protein operates within glycan degradation; trehalose degradation; D-glucose from alpha,alpha-trehalose: step 1/1. Its function is as follows. Hydrolyzes trehalose to glucose. Could be involved, in cells returning to low osmolarity conditions, in the utilization of the accumulated cytoplasmic trehalose, which was synthesized in response to high osmolarity. In Escherichia coli O81 (strain ED1a), this protein is Cytoplasmic trehalase.